Here is a 469-residue protein sequence, read N- to C-terminus: Mannosyl-oligosaccharide 1,2-alpha-mannosidase IA (469 aa).

The Lumenal portion of the chain corresponds to 1–469 (REPADAAVRE…DQKEVEVKVK (469 aa)). A disulfide bond links Cys292 and Cys324. Asn329 carries N-linked (GlcNAc...) asparagine glycosylation. Catalysis depends on Glu338, which acts as the Proton donor. Residue Thr449 participates in Ca(2+) binding.

The protein belongs to the glycosyl hydrolase 47 family. Requires Ca(2+) as cofactor.

It is found in the golgi apparatus membrane. It carries out the reaction N(4)-(alpha-D-Man-(1-&gt;2)-alpha-D-Man-(1-&gt;2)-alpha-D-Man-(1-&gt;3)-[alpha-D-Man-(1-&gt;2)-alpha-D-Man-(1-&gt;3)-[alpha-D-Man-(1-&gt;2)-alpha-D-Man-(1-&gt;6)]-alpha-D-Man-(1-&gt;6)]-beta-D-Man-(1-&gt;4)-beta-D-GlcNAc-(1-&gt;4)-beta-D-GlcNAc)-L-asparaginyl-[protein] (N-glucan mannose isomer 9A1,2,3B1,2,3) + 4 H2O = N(4)-(alpha-D-Man-(1-&gt;3)-[alpha-D-Man-(1-&gt;3)-[alpha-D-Man-(1-&gt;6)]-alpha-D-Man-(1-&gt;6)]-beta-D-Man-(1-&gt;4)-beta-D-GlcNAc-(1-&gt;4)-beta-D-GlcNAc)-L-asparaginyl-[protein] (N-glucan mannose isomer 5A1,2) + 4 beta-D-mannose. It catalyses the reaction N(4)-(alpha-D-Man-(1-&gt;2)-alpha-D-Man-(1-&gt;2)-alpha-D-Man-(1-&gt;3)-[alpha-D-Man-(1-&gt;3)-[alpha-D-Man-(1-&gt;2)-alpha-D-Man-(1-&gt;6)]-alpha-D-Man-(1-&gt;6)]-beta-D-Man-(1-&gt;4)-beta-D-GlcNAc-(1-&gt;4)-beta-D-GlcNAc)-L-asparaginyl-[protein] (N-glucan mannose isomer 8A1,2,3B1,3) + 3 H2O = N(4)-(alpha-D-Man-(1-&gt;3)-[alpha-D-Man-(1-&gt;3)-[alpha-D-Man-(1-&gt;6)]-alpha-D-Man-(1-&gt;6)]-beta-D-Man-(1-&gt;4)-beta-D-GlcNAc-(1-&gt;4)-beta-D-GlcNAc)-L-asparaginyl-[protein] (N-glucan mannose isomer 5A1,2) + 3 beta-D-mannose. It functions in the pathway protein modification; protein glycosylation. Its activity is regulated as follows. Inhibited by both 1-deoxymannojirimycin and kifunensine. Functionally, involved in the maturation of Asn-linked oligosaccharides. Progressively trim alpha-1,2-linked mannose residues from Man(9)GlcNAc(2) to produce Man(5)GlcNAc(2). This is Mannosyl-oligosaccharide 1,2-alpha-mannosidase IA (MAN1A1) from Oryctolagus cuniculus (Rabbit).